The primary structure comprises 808 residues: DNA ligase (808 aa).

Positions Met-1–Pro-30 are disordered. A compositionally biased stretch (low complexity) spans Pro-18 to Pro-30. NAD(+)-binding positions include Asp-61–Asp-65, Ser-110–Leu-111, and Asp-141. Residue Lys-143 is the N6-AMP-lysine intermediate of the active site. NAD(+) is bound by residues Arg-164, Glu-202, Lys-334, and Lys-358. Cys-453, Cys-456, Cys-471, and Cys-476 together coordinate Zn(2+). Positions Glu-644 to Gly-733 constitute a BRCT domain. A disordered region spans residues Leu-720–Leu-808. Positions Val-727–Pro-742 are enriched in acidic residues. Low complexity predominate over residues Ala-746–Gly-773. Positions Asp-779 to Ser-792 are enriched in basic and acidic residues.

It belongs to the NAD-dependent DNA ligase family. LigA subfamily. Mg(2+) is required as a cofactor. Mn(2+) serves as cofactor.

The enzyme catalyses NAD(+) + (deoxyribonucleotide)n-3'-hydroxyl + 5'-phospho-(deoxyribonucleotide)m = (deoxyribonucleotide)n+m + AMP + beta-nicotinamide D-nucleotide.. Functionally, DNA ligase that catalyzes the formation of phosphodiester linkages between 5'-phosphoryl and 3'-hydroxyl groups in double-stranded DNA using NAD as a coenzyme and as the energy source for the reaction. It is essential for DNA replication and repair of damaged DNA. The protein is DNA ligase of Nitratidesulfovibrio vulgaris (strain DSM 19637 / Miyazaki F) (Desulfovibrio vulgaris).